A 209-amino-acid polypeptide reads, in one-letter code: uncharacterized protein (209 aa).

Residues 1-17 (MKRLVTGLLALSLFLAA) form the signal peptide. The interval 17–105 (ACGQDSDQQK…SNNQANNNQK (89 aa)) is disordered. Cys18 is lipidated: N-palmitoyl cysteine. Cys18 carries S-diacylglycerol cysteine lipidation. Positions 23 to 70 (DQQKDGNKEKDDKAKTEQQDKKTNDSSKDKKDNKDDSKDVNKDNKDNS) are enriched in basic and acidic residues. The span at 71-105 (ANDNQQQSNSNATNNDQNQTNNNQSSNNQANNNQK) shows a compositional bias: low complexity.

The protein localises to the cell membrane. This is an uncharacterized protein from Staphylococcus aureus (strain COL).